Reading from the N-terminus, the 433-residue chain is 23S rRNA (uracil(1939)-C(5))-methyltransferase RlmD (433 aa).

A TRAM domain is found at 10-68 (RTTTRQIITVSVNDLDSFGQGVARHNGKTLFIPGLLPQENAEVTVTEDKKQYARAKVVR). Residues Cys-81, Cys-87, Cys-90, and Cys-162 each coordinate [4Fe-4S] cluster. Positions 265, 294, 299, 315, 342, and 363 each coordinate S-adenosyl-L-methionine. Cys-389 (nucleophile) is an active-site residue.

The protein belongs to the class I-like SAM-binding methyltransferase superfamily. RNA M5U methyltransferase family. RlmD subfamily.

The enzyme catalyses uridine(1939) in 23S rRNA + S-adenosyl-L-methionine = 5-methyluridine(1939) in 23S rRNA + S-adenosyl-L-homocysteine + H(+). In terms of biological role, catalyzes the formation of 5-methyl-uridine at position 1939 (m5U1939) in 23S rRNA. This is 23S rRNA (uracil(1939)-C(5))-methyltransferase RlmD from Escherichia coli (strain UTI89 / UPEC).